A 499-amino-acid chain; its full sequence is Potassium voltage-gated channel subfamily A member 2 (499 aa).

The segment at 1-26 is disordered; that stretch reads MTVATGDPADEAAALPGHPQDTYDPE. The segment at 1-125 is tetramerization domain; the sequence is MTVATGDPAD…YELGEEAMEM (125 aa). Residues 1–160 are Cytoplasmic-facing; it reads MTVATGDPAD…LLFEYPESSG (160 aa). A helical membrane pass occupies residues 161–182; the sequence is PARIIAIVSVMVILISIVSFCL. Residues 183–221 are Extracellular-facing; that stretch reads ETLPIFRDENEDMHGSGVTFHTYSNSTIGYQQSTSFTDP. N207 carries an N-linked (GlcNAc...) asparagine glycan. A helical membrane pass occupies residues 222 to 243; that stretch reads FFIVETLCIIWFSFEFLVRFFA. C244 carries the S-palmitoyl cysteine lipid modification. The Cytoplasmic portion of the chain corresponds to 244–254; it reads CPSKAGFFTNI. Residues 255–275 form a helical membrane-spanning segment; the sequence is MNIIDIVAIIPYFITLGTELA. At 276-289 the chain is on the extracellular side; it reads EKPEDAQQGQQAMS. Residues 290-310 form a helical; Voltage-sensor membrane-spanning segment; the sequence is LAILRVIRLVRVFRIFKLSRH. Topologically, residues 311–325 are cytoplasmic; sequence SKGLQILGQTLKASM. The segment at 312 to 325 is S4-S5 linker; it reads KGLQILGQTLKASM. Residues 326-347 form a helical membrane-spanning segment; that stretch reads RELGLLIFFLFIGVILFSSAVY. Residues 348–361 lie on the Extracellular side of the membrane; that stretch reads FAEADERESQFPSI. Residues 362 to 373 constitute an intramembrane region (helical); it reads PDAFWWAVVSMT. A Selectivity filter motif is present at residues 374 to 379; that stretch reads TVGYGD. Residues 374-381 lie within the membrane without spanning it; that stretch reads TVGYGDMV. The Extracellular portion of the chain corresponds to 382–388; the sequence is PTTIGGK. The helical transmembrane segment at 389 to 417 threads the bilayer; the sequence is IVGSLCAIAGVLTIALPVPVIVSNFNYFY. Residues 418-499 lie on the Cytoplasmic side of the membrane; the sequence is HRETEGEEQA…VNITKMLTDV (82 aa). Y429 is modified (phosphotyrosine). 4 positions are modified to phosphoserine: S434, S440, S441, and S449. Y458 is subject to Phosphotyrosine. S468 is subject to Phosphoserine. The short motif at 497-499 is the PDZ-binding element; sequence TDV.

It belongs to the potassium channel family. A (Shaker) (TC 1.A.1.2) subfamily. Kv1.2/KCNA2 sub-subfamily. As to quaternary structure, homotetramer and heterotetramer with other channel-forming alpha subunits, such as KCNA1, KCNA4, KCNA5, KCNA6 and KCNA7. Channel activity is regulated by interaction with the beta subunits, including KCNAB1 and KCNAB2. Identified in a complex with KCNA1 and KCNAB2. Identified in a complex with KCNA5 and KCNAB1. Identified in a complex with KCNA4 and FYN. Interacts with the beta subunit KCNAB1. Interacts with PTK2B. Interacts (via C-terminus) with CTTN. Interacts (via N-terminal cytoplasmic domain) with RHOA (GTP-bound form); this regulates channel activity by reducing location at the cell surface in response to CHRM1 activation. Interacts with DRD2. Interacts with SIGMAR1; cocaine consumption leads to increased interaction. Interacts with ADAM22. Interacts (via C-terminus) with the PDZ domains of DLG1, DLG2 and DLG4. Interacts with CNTNAP2. Interacts with ADAM11. Interacts with LYNX1. Post-translationally, phosphorylated on tyrosine residues; phosphorylation increases in response to ischemia. Phosphorylated on tyrosine residues by activated PTK2B/PYK2. Phosphorylation on tyrosine residues suppresses ion channel activity. Phosphorylated on tyrosine residues in response to CHRM1 activation; this abolishes interaction with CTTN. This is probably due to endocytosis of the phosphorylated channel subunits. Phosphorylated on serine residues in response to increased cAMP levels; phosphorylation is apparently not catalyzed by PKA. In terms of processing, N-glycosylated, with complex, sialylated N-glycans. As to expression, detected in brain cortex. Detected in peroneal nerve in the juxtaparanodal regions of the node of Ranvier; expression is decreased in patients with diabetes mellitus that suffer from axonal neuropathy. Detected in paranodal and juxtanodal zones in myelinated spinal cord (at protein level).

The protein resides in the cell membrane. Its subcellular location is the membrane. It localises to the cell projection. The protein localises to the axon. It is found in the synapse. The protein resides in the endoplasmic reticulum membrane. Its subcellular location is the lamellipodium membrane. It localises to the synaptosome. The protein localises to the presynaptic cell membrane. It is found in the dendrite. The protein resides in the cell junction. Its subcellular location is the paranodal septate junction. The enzyme catalyses K(+)(in) = K(+)(out). Its activity is regulated as follows. Inhibited by 4-aminopyridine (4-AP) and charybdotoxin (CTX), but not by tetraethylammonium (TEA). Inhibited by dendrotoxin (DTX). Inhibited by tityustoxin-K alpha (TsTX-Kalpha), a toxin that is highly specific for KCNA2. Inhibited by maurotoxin. Inhibited by kappaM conotoxins kappaM-RIIIJ and kappaM-RIIIK; kappaM-RIIIJ has much higher affinity for channels containing KCNA2 than kappaM-RIIIK, with the exception of heterodimers formed by KCNA2 and KCNA7 where the opposite is true. In terms of biological role, voltage-gated potassium channel that mediates transmembrane potassium transport in excitable membranes, primarily in the brain and the central nervous system, but also in the cardiovascular system. Prevents aberrant action potential firing and regulates neuronal output. Forms tetrameric potassium-selective channels through which potassium ions pass in accordance with their electrochemical gradient. The channel alternates between opened and closed conformations in response to the voltage difference across the membrane. Can form functional homotetrameric channels and heterotetrameric channels that contain variable proportions of KCNA1, KCNA2, KCNA4, KCNA5, KCNA6, KCNA7, and possibly other family members as well; channel properties depend on the type of alpha subunits that are part of the channel. Channel properties are modulated by cytoplasmic beta subunits that regulate the subcellular location of the alpha subunits and promote rapid inactivation of delayed rectifier potassium channels. In vivo, membranes probably contain a mixture of heteromeric potassium channel complexes, making it difficult to assign currents observed in intact tissues to any particular potassium channel family member. Homotetrameric KCNA2 forms a delayed-rectifier potassium channel that opens in response to membrane depolarization, followed by slow spontaneous channel closure. In contrast, a heteromultimer formed by KCNA2 and KCNA4 shows rapid inactivation. Regulates neuronal excitability and plays a role as pacemaker in the regulation of neuronal action potentials. KCNA2-containing channels play a presynaptic role and prevent hyperexcitability and aberrant action potential firing. Response to toxins that are selective for KCNA2-containing potassium channels suggests that in Purkinje cells, dendritic subthreshold KCNA2-containing potassium channels prevent random spontaneous calcium spikes, suppressing dendritic hyperexcitability without hindering the generation of somatic action potentials, and thereby play an important role in motor coordination. Plays a role in the induction of long-term potentiation of neuron excitability in the CA3 layer of the hippocampus. May function as down-stream effector for G protein-coupled receptors and inhibit GABAergic inputs to basolateral amygdala neurons. May contribute to the regulation of neurotransmitter release, such as gamma-aminobutyric acid (GABA). Contributes to the regulation of the axonal release of the neurotransmitter dopamine. Reduced KCNA2 expression plays a role in the perception of neuropathic pain after peripheral nerve injury, but not acute pain. Plays a role in the regulation of the time spent in non-rapid eye movement (NREM) sleep. The sequence is that of Potassium voltage-gated channel subfamily A member 2 (KCNA2) from Homo sapiens (Human).